The sequence spans 214 residues: MKRTHLASFSNRDKTQEEEGEDGNGDNRVIMNHYKNYEAGLIPWPPKNYTCSFCRREFRSAQALGGHMNVHRRDRAKLRQIPSWLFEPHHHTPIANPNPNFSSSSSSSTTTAHLEPSLTNQRSKTTPFPSARFDLLDSTTSYGGLMMDREKNKSNVCSREIKKSAIDACHSVRCEISRGDLMNKKDDQVMGLELGMSLRNPNQVLDLELRLGYL.

Residues methionine 1 to asparagine 27 are disordered. A C2H2-type zinc finger spans residues tyrosine 49–histidine 71. The short motif at arginine 72 to arginine 79 is the Nuclear localization signal element. Residues histidine 89–serine 130 are disordered. Low complexity predominate over residues serine 102 to threonine 111. The segment covering serine 117 to phenylalanine 128 has biased composition (polar residues).

Expressed in roots, stems, axillary buds and flowers.

It is found in the nucleus. Probable transcription factor that may regulate cell division and growth. The sequence is that of Zinc finger protein 11 from Arabidopsis thaliana (Mouse-ear cress).